Here is a 459-residue protein sequence, read N- to C-terminus: Argininosuccinate lyase (459 aa).

This sequence belongs to the lyase 1 family. Argininosuccinate lyase subfamily.

The protein resides in the cytoplasm. The catalysed reaction is 2-(N(omega)-L-arginino)succinate = fumarate + L-arginine. It participates in amino-acid biosynthesis; L-arginine biosynthesis; L-arginine from L-ornithine and carbamoyl phosphate: step 3/3. This is Argininosuccinate lyase from Staphylococcus aureus (strain MRSA252).